Here is a 226-residue protein sequence, read N- to C-terminus: Lysoplasmalogenase TMEM86B (226 aa).

Residues Met-1–Arg-23 are Cytoplasmic-facing. Residues Trp-24–Ile-40 form a helical membrane-spanning segment. Over Pro-41–Ser-46 the chain is Extracellular. The helical transmembrane segment at Trp-47–Ala-68 threads the bilayer. Topologically, residues Pro-69–Thr-74 are cytoplasmic. The helical transmembrane segment at Trp-75–Trp-93 threads the bilayer. Topologically, residues Pro-94–Tyr-99 are extracellular. A helical membrane pass occupies residues Gly-100–Leu-117. Residues Thr-118–Gly-123 lie on the Cytoplasmic side of the membrane. Residues Leu-124–Leu-140 traverse the membrane as a helical segment. Topologically, residues Leu-141 to Gly-146 are extracellular. A helical transmembrane segment spans residues Met-147–Trp-163. At Arg-164–Ser-171 the chain is on the cytoplasmic side. The helical transmembrane segment at Ala-172–Trp-188 threads the bilayer. Residues Asp-189–Arg-199 lie on the Extracellular side of the membrane. The helical transmembrane segment at Leu-200–Leu-218 threads the bilayer. Residues Arg-219 to His-226 lie on the Cytoplasmic side of the membrane.

The protein belongs to the TMEM86 family. As to quaternary structure, homodimer. Enriched in liver. Also detected in brain and testis.

It localises to the endoplasmic reticulum membrane. The protein localises to the cytoplasm. It carries out the reaction a 1-O-(1Z-alkenyl)-sn-glycero-3-phosphocholine + H2O = a 2,3-saturated aldehyde + sn-glycerol 3-phosphocholine. The enzyme catalyses a 1-O-(1Z-alkenyl)-sn-glycero-3-phosphoethanolamine + H2O = a 2,3-saturated aldehyde + sn-glycero-3-phosphoethanolamine. Competitively inhibited by lysophosphatidic acid. In terms of biological role, catalyzes the hydrolysis of the vinyl ether bond of choline or ethanolamine lysoplasmalogens, forming fatty aldehyde and glycerophosphocholine or glycerophosphoethanolamine, respectively and is specific for the sn-2-deacylated (lyso) form of plasmalogen. In Mus musculus (Mouse), this protein is Lysoplasmalogenase TMEM86B (Tmem86b).